A 253-amino-acid chain; its full sequence is Tryptophan synthase alpha chain (253 aa).

Active-site proton acceptor residues include Glu46 and Asp57.

This sequence belongs to the TrpA family. Tetramer of two alpha and two beta chains.

The enzyme catalyses (1S,2R)-1-C-(indol-3-yl)glycerol 3-phosphate + L-serine = D-glyceraldehyde 3-phosphate + L-tryptophan + H2O. It participates in amino-acid biosynthesis; L-tryptophan biosynthesis; L-tryptophan from chorismate: step 5/5. Functionally, the alpha subunit is responsible for the aldol cleavage of indoleglycerol phosphate to indole and glyceraldehyde 3-phosphate. The chain is Tryptophan synthase alpha chain from Dictyoglomus turgidum (strain DSM 6724 / Z-1310).